The following is a 329-amino-acid chain: Serine dehydratase-like (329 aa).

M1 carries the N-acetylmethionine modification. The residue at position 48 (K48) is an N6-(pyridoxal phosphate)lysine.

It belongs to the serine/threonine dehydratase family. As to quaternary structure, monomer. Homodimer. Pyridoxal 5'-phosphate serves as cofactor. Expressed in lung cancer cell lines.

The enzyme catalyses L-serine = pyruvate + NH4(+). It catalyses the reaction L-threonine = 2-oxobutanoate + NH4(+). The catalysed reaction is L-glutamate = D-glutamate. In terms of biological role, catalyzes the pyridoxal-phosphate-dependent dehydrative deamination of L-threonine and L-serine to ammonia and alpha-ketobutyrate and pyruvate, respectively. Also exhibits racemase activity towards L-glutamate and D-glutamate. This chain is Serine dehydratase-like (SDSL), found in Homo sapiens (Human).